Consider the following 631-residue polypeptide: RING finger protein 112 (631 aa).

Residues 57–98 (CSICLERLREPISLDCGHDFCIRCFSTHRIPGCELPCCPECR) form an RING-type zinc finger. Residues 131–631 (AVRAERLLLV…GDREPLLQEE (501 aa)) are interaction with ZBTB16. The 232-residue stretch at 166–397 (DTPVCLLAVL…YISDVLSTAP (232 aa)) folds into the GB1/RHD3-type G domain. Residue 317-318 (RD) coordinates GTP. 2 helical membrane-spanning segments follow: residues 547–567 (LAAV…GVVG) and 580–600 (GMVA…GGGV).

This sequence belongs to the TRAFAC class dynamin-like GTPase superfamily. GB1/RHD3 GTPase family. GB1 subfamily. Self-associates. Interacts with SP1 in an oxidative stress-regulated manner. Interacts with SIGMAR1 in an oxidative stress-regulated manner. Interacts with ZBTB16 (via C2H2-type zinc finger domains 1 and 2). In terms of processing, auto-ubiquitinated. As to expression, predominantly expressed in brain.

The protein localises to the membrane. The protein resides in the cytoplasm. It is found in the nucleus. Its subcellular location is the nuclear body. It localises to the nucleoplasm. The protein localises to the endosome. The protein resides in the cytoplasmic vesicle. It is found in the secretory vesicle. Its subcellular location is the synaptic vesicle. It localises to the postsynaptic density. The protein localises to the perikaryon. The protein resides in the cell projection. It is found in the neuron projection. The catalysed reaction is S-ubiquitinyl-[E2 ubiquitin-conjugating enzyme]-L-cysteine + [acceptor protein]-L-lysine = [E2 ubiquitin-conjugating enzyme]-L-cysteine + N(6)-ubiquitinyl-[acceptor protein]-L-lysine.. It functions in the pathway protein modification; protein ubiquitination. In terms of biological role, E3 ubiquitin-protein ligase that plays an important role in neuronal differentiation, including neurogenesis and gliogenesis, during brain development. During embryonic development initiates neuronal differentiation by inducing cell cycle arrest at the G0/G1 phase through up-regulation of cell-cycle regulatory proteins. Plays a role not only in the fetal period during the development of the nervous system, but also in the adult brain, where it is involved in the maintenance of neural functions and protection of the nervous tissue cells from oxidative stress-induced damage. Exhibits GTPase and E3 ubiquitin-protein ligase activities. Regulates dendritic spine density and synaptic neurotransmission; its ability to hydrolyze GTP is involved in the maintenance of dendritic spine density. The chain is RING finger protein 112 (Rnf112) from Rattus norvegicus (Rat).